A 239-amino-acid chain; its full sequence is Leucyl/phenylalanyl-tRNA--protein transferase (239 aa).

It belongs to the L/F-transferase family.

The protein localises to the cytoplasm. It catalyses the reaction N-terminal L-lysyl-[protein] + L-leucyl-tRNA(Leu) = N-terminal L-leucyl-L-lysyl-[protein] + tRNA(Leu) + H(+). It carries out the reaction N-terminal L-arginyl-[protein] + L-leucyl-tRNA(Leu) = N-terminal L-leucyl-L-arginyl-[protein] + tRNA(Leu) + H(+). The enzyme catalyses L-phenylalanyl-tRNA(Phe) + an N-terminal L-alpha-aminoacyl-[protein] = an N-terminal L-phenylalanyl-L-alpha-aminoacyl-[protein] + tRNA(Phe). Its function is as follows. Functions in the N-end rule pathway of protein degradation where it conjugates Leu, Phe and, less efficiently, Met from aminoacyl-tRNAs to the N-termini of proteins containing an N-terminal arginine or lysine. The chain is Leucyl/phenylalanyl-tRNA--protein transferase from Aliivibrio fischeri (strain ATCC 700601 / ES114) (Vibrio fischeri).